Here is a 250-residue protein sequence, read N- to C-terminus: MANLRIEVISLFPEMFSAISEYGITSRAVKQGLLQLTCWNPRDYTTDRHHTVDDRPFGGGPGMVMKIKPLEDALAQAKAAAGEKAKVIYLSPQGRQLKQAGVRELANEEALILIAGRYEGIDERFIEAHVDEEWSIGDYVLSGGELPAMVLIDAVTRLLPGALGHADSAEEDSFTDGLLDCPHYTRPEVYADQRVPDVLLSGNHAHIRRWRLQQSLGRTYERRADLLESRSLSGEEKKLLEEYILARDDS.

Residues glycine 116 and 136–141 (IGDYVL) contribute to the S-adenosyl-L-methionine site.

It belongs to the RNA methyltransferase TrmD family. As to quaternary structure, homodimer.

The protein resides in the cytoplasm. The enzyme catalyses guanosine(37) in tRNA + S-adenosyl-L-methionine = N(1)-methylguanosine(37) in tRNA + S-adenosyl-L-homocysteine + H(+). Its function is as follows. Specifically methylates guanosine-37 in various tRNAs. The sequence is that of tRNA (guanine-N(1)-)-methyltransferase from Pseudomonas fluorescens (strain SBW25).